The chain runs to 952 residues: Leucine--tRNA ligase (952 aa).

The 'HIGH' region motif lies at 65–76 (PYPSGAGLHVGH). The 'KMSKS' region signature appears at 727–731 (KMGKS). K730 lines the ATP pocket.

It belongs to the class-I aminoacyl-tRNA synthetase family.

It localises to the cytoplasm. It catalyses the reaction tRNA(Leu) + L-leucine + ATP = L-leucyl-tRNA(Leu) + AMP + diphosphate. In Salinispora arenicola (strain CNS-205), this protein is Leucine--tRNA ligase.